Here is a 292-residue protein sequence, read N- to C-terminus: Bifunctional protein FolD (292 aa).

NADP(+)-binding positions include 166–168 (GRS), S191, and I232.

This sequence belongs to the tetrahydrofolate dehydrogenase/cyclohydrolase family. As to quaternary structure, homodimer.

The catalysed reaction is (6R)-5,10-methylene-5,6,7,8-tetrahydrofolate + NADP(+) = (6R)-5,10-methenyltetrahydrofolate + NADPH. It catalyses the reaction (6R)-5,10-methenyltetrahydrofolate + H2O = (6R)-10-formyltetrahydrofolate + H(+). The protein operates within one-carbon metabolism; tetrahydrofolate interconversion. Its function is as follows. Catalyzes the oxidation of 5,10-methylenetetrahydrofolate to 5,10-methenyltetrahydrofolate and then the hydrolysis of 5,10-methenyltetrahydrofolate to 10-formyltetrahydrofolate. The protein is Bifunctional protein FolD of Synechococcus sp. (strain RCC307).